A 179-amino-acid polypeptide reads, in one-letter code: Proteasome chaperone 3 (179 aa).

The protein belongs to the PSMG3 family. As to quaternary structure, component of the 20S proteasome chaperone. Forms a heterodimer with POC4 that binds to proteasome precursors. Interacts with POP2.

Its function is as follows. Involved in 20S proteasome assembly, facilitating the alpha-ring formation. This Saccharomyces cerevisiae (strain ATCC 204508 / S288c) (Baker's yeast) protein is Proteasome chaperone 3 (IRC25).